Consider the following 314-residue polypeptide: Mitochondrial 2-oxoglutarate/malate carrier protein (314 aa).

A2 is subject to N-acetylalanine. The residue at position 6 (S6) is a Phosphoserine. 3 Solcar repeats span residues 23 to 108 (VKFL…LFER), 117 to 208 (PGFL…SKQF), and 217 to 306 (DNIL…MNKA). A helical membrane pass occupies residues 24–42 (KFLFGGLAGMGATVFVQPL). K57 is modified (N6-succinyllysine). At K73 the chain carries N6-acetyllysine. A helical membrane pass occupies residues 83–101 (GLSAGLLRQATYTTTRLGI). Y102 bears the Phosphotyrosine mark. Transmembrane regions (helical) follow at residues 119–140 (FLLKALIGMTAGATGAFVGPPA), 183–202 (GCIPTMARAVVVNAAQLASY), and 222–240 (HFCAIMISGLVTTAASMPV). K256 carries the post-translational modification N6-acetyllysine. A helical membrane pass occupies residues 281–300 (GFTPYYARLGPHTVLTFIFL).

Belongs to the mitochondrial carrier (TC 2.A.29) family. In terms of assembly, interacts with SMIM26. Expressed in liver, heart and brain.

It localises to the mitochondrion inner membrane. It catalyses the reaction (S)-malate(in) + 2-oxoglutarate(out) = (S)-malate(out) + 2-oxoglutarate(in). The catalysed reaction is malonate(in) + 2-oxoglutarate(out) = malonate(out) + 2-oxoglutarate(in). It carries out the reaction succinate(in) + 2-oxoglutarate(out) = succinate(out) + 2-oxoglutarate(in). The enzyme catalyses maleate(in) + 2-oxoglutarate(out) = maleate(out) + 2-oxoglutarate(in). It catalyses the reaction oxaloacetate(in) + 2-oxoglutarate(out) = oxaloacetate(out) + 2-oxoglutarate(in). Its function is as follows. Catalyzes the transport of 2-oxoglutarate (alpha-oxoglutarate) across the inner mitochondrial membrane in an electroneutral exchange for malate. Can also exchange 2-oxoglutarate for other dicarboxylic acids such as malonate, succinate, maleate and oxaloacetate, although with lower affinity. Contributes to several metabolic processes, including the malate-aspartate shuttle, the oxoglutarate/isocitrate shuttle, in gluconeogenesis from lactate, and in nitrogen metabolism. Maintains mitochondrial fusion and fission events, and the organization and morphology of cristae. Involved in the regulation of apoptosis. Helps protect from cytotoxic-induced apoptosis by modulating glutathione levels in mitochondria. This Rattus norvegicus (Rat) protein is Mitochondrial 2-oxoglutarate/malate carrier protein (Slc25a11).